Consider the following 3424-residue polypeptide: MSKKPGKSAAKRTVNMLKRLASVSPSRGRRTIRRMLDVRGAPRLILALMAFFRFAAIKPTLGLKKRWRSVNKTVAVKHLTNFKKELTTMLDSVNKRKEKKKSFSTALLWITMITAVAGLKISSHRDRPLLMVNKTDVSDAIPVPSVKGTNMCTIRALDVGYTCAYDTTYECPHLEVTMDPEDIDCWCTLESVYVNYGLCKQNHHVRRGRRAINIPHHGESHLENRATPWMDTTKTTKYLTKVENWVIRNPGYALVALATAWMLGSNTPQRVVFMIMMMLIAPAYSLNCLGISNRDFVEGLSGGTWVDIVLEGGSCVTVMAKDKPTLDIKLIRMEAKDLATVRSYCYQATVTDSSTEARCPTMGEAHNSKSLDASYVCKSSYVDRGWGNGCGLFGKGSIQTCVKFSCPGKATGKSIQRENLNYDVAVYVHGPISAAAHGNYTAQLTGKYAAKFSITPSAPTYTANLGEYGEATMECEPRAALDIDNYYVMSLNNKHWLVNRDWFHDLDLPWTGPATESWKNRESLIEFEEPHATRQTVVALGNQEGALHTALAGAIPVEVSSTTLTLNSGHLKCRLKLDKLKIKGTTYAMCKGTFAFAQTPVDTGHGTIVAELTYTGTDGPCKIPISMTADLRDMTPIGRLVTVNPIIPSSAKSQKILVELEPPFGSSFILVGQENNQIKYQWHKTGSTIGNALKTTWKGAQRFAVLGDTAWDFGSVGGIFNSIGKTIHGVFGTAFRSLFGGMSWVTQALMGALLLWLGISARERTVSLIMLSVGGILLFLAVNVHADTGCAIDMARRELKCGSGIFIHNDVETWRNNYKYHPLTPRGFAKVIQMSKDKGVCGIRSVGRLEHEMWEAIAPELNAIFEDNGVDLSVVVKGQTGIYKRAPKRLTETKDEMSFGWKNWGKSFIFSTETANSTFIVDGPESKECPTSDRAWNSLELEDFGFGIISTKIFLKVNEQRGNSCDSAVIGTAVKGNEAVHSDLGFWIQSTKNESWQLERAVLGEVKSCTWPESHTLWGDGVEESDLIIPITLAGPKSHHNMRPGYKTQTKGPWHEETPLVIEFAECPGTTVTQEESCGGRGPSIRTTTASGRTIRNWCCKNCTLPPLRFMAGENCWYGVEVRPKRENEETLIKSKVSAGNGQTIEPFQLGILMAFVFTQEVLRRRWTANLALPTSALLMACFIFGGFTYLDLFRYFILVGAAFAEANSGGDVVHLAMIAAFNIQPVALVTTFFRKNWTNRENMILIIAAACTQMACMELKIELFHVMNSLSLAWMILKALTTGTTSTLAMPFLAALSPPMNWLGLDVVRCLLIMAGVAALISERRESLAKKKGALLISAALALTGAFSPLVLQGALMFTQSLGKRGWPASEVLTAVGMTFALAGSVARLDGGTMAIPLATMAILAVAYVLSGKSTDMWLERCADISWINEAEITGTSPRLDVELDSNGDFKMINDPGVPMWMWTCRMGLMAMAAYNPVLIPVSMAGYWMTVKIHKRGGVMWDVPAPKQFGKTELKPGVYRVMTMGILGRYQSGVGVMWDGVFHTMWHVTQGAALRNGEGRLNPTWGSVRDDLISYGGKWKLSATWNGSEEVQMIAVEPGKAAKNYQTKPGVFKTPAGEIGAITLDFPKGTSGSPIINKAGEITGLYGNGIVLERGAYVSAITQGERQEEETPEAFTPDMLKKRRLTILDLHPGAGKTRRVIPQIVRECVKARLRTVILVPTRVVAAEMAEALRGLPIRYQTSAVKAEHSGNEIVDAMRHATLTQRLLTPAKVPNYNVFVMDEAHFTDPASIAARGYISTKVELGEAAAIFMTATPPGTTDPFPDSNAPIIDQEAEIPDRAWNSGFEWITEYTGKTVWFVPSVRMGNEIAMCLTKAGKKVIQLNRKSYDSEYQKCKGNDWDFVITTDISEMGANFGAHRVIDSRKCVKPVILDGDDRVLMNGPAPITPASAAQRRGRIGRDPTQSGDEYFYGGPTTTDDTGHAHWIEAKILLDNIQLQNGLVAQLYGPERDKVFTTDGEYRLRSEQKKNFVEFLRTGDLPVWLSYKVAEAGYAYTDRRWCFDGPANNTILEVRGDPEVWTRQGEKRILRPRWSDARVYCDNQALRSFKEFAAGKRSAGSVMEVMGRMPDYFWTKTLNAADNLYVLATANKGGRAHQAALEELPDTVETILLMTMMCVASLGMFTLMVHRRGLGKTGLGTLVLATVTVLLWISDVPAPKIAGVLLIAFLLMIVLIPEPEKQRSQTDNHLAIFLVCVLLLIGAVSANEMGWLETTKKDIGKLFRSSGDTQEQSTWQSWAPEVRAATAWAGYAGLTVFLTPLFRHLITTQYVSFSLTAITAQASALFGLSAGYPFVGIDLAVGFLLLGCYGQYNLPTAVATGLLLLAHYGYMIPGWQAEAMRAAQKRTAAGVMKNAVVDGIVATDIPEVDTATPITEKKLGQILLILLCGASLLVKFDTMVLVEAGVLTTSAMATLIEGNANTVWNSTVAVGVCHLMRGAWLAGPSIGWTIVRNLENPKLKRGGGSAPTLGEIWKAQLNQLTREEFMAYRRDGILEVDRTQARRARQSGITTGGHPVSRGTAKLRWMVERGFVRPIGKVVDLGCGRGGWSYYCATLRHVQEVRGYTKGGPGHEEPVMMQSYGWNIVTMKSGVDVFYKPTESCDTLLCDIGESSSSVGVEEARTLRVLDMVEPWLRAANSFCIKVLCPYTPKVIERLERLQRAYGGGLVRVPLSRNSTHEMYWVSGASSNIINAVTVTSQILVQRMNKGCRHGPRYEEDVCLGSGTRAVATQASPSDHTKIKHRLERLRKEFSATWHIDLEHPYRTWHYHGSYEVQPTGSANSMVNGVVRLLSKPWDAITSVVTMAMTDTTPFGQQRVFKEKVDTRAPDPAVGVAQALDITTGWLWTFLARSKKPRMCTREEFIAKVNSNAALGAVFDEQNQWSTAREAVEDPAFWNLVDEERKAHLAGRCETCIYNMMGKREKKLGEFGKAKGSRAIWYMWLGARFLEFEALGFLNEDHWMSRENSLGGVEGQGLQKLGYILRDISHLEGGNMFADDTAGWDTRITRADLENEAKVMNMMDGEHKQLAKAIIELTYRHKVVKVMRPARGGKTVMDIISREDQRGSGQVVTYALNTFTNLAAQLVRCMEGEELLTESDVHGLSPKKKQAVRNWLIQNGRERLSRMAVSGDDCVVKPIDDRFASALHFLNGMAKIRKDTQEWKPSVGWSNWQEVPFGSHHFNELLMKDGRTIVVPCRSQDELVGRARVSPGSGWSLRETACLSKAYAQMWLLMYFHRRDLRLMANAICSAVPVDWVPTGRTTWSIHGKGEWMTTEDMLQVWNRVWIEDNEHMEDKTPITSWTDIPYIGKREDQWCGSLIGTRQRATWAENIYTPIMQIRNLIGDEKYVDCMVSQHRFETPSPVLFTGAI.

The tract at residues 2–15 (SKKPGKSAAKRTVN) is interaction with host EXOC1. The Cytoplasmic portion of the chain corresponds to 2-101 (SKKPGKSAAK…SVNKRKEKKK (100 aa)). The segment at 35-70 (MLDVRGAPRLILALMAFFRFAAIKPTLGLKKRWRSV) is hydrophobic; homodimerization of capsid protein C. Residues 102 to 118 (SFSTALLWITMITAVAG) constitute a propeptide, ER anchor for the capsid protein C, removed in mature form by serine protease NS3. Residues 102–122 (SFSTALLWITMITAVAGLKIS) form a helical membrane-spanning segment. Residues 123-244 (SHRDRPLLMV…TTKYLTKVEN (122 aa)) are Extracellular-facing. N-linked (GlcNAc...) asparagine; by host glycosylation is present at asparagine 133. A helical membrane pass occupies residues 245-265 (WVIRNPGYALVALATAWMLGS). At 266-270 (NTPQR) the chain is on the cytoplasmic side. The helical transmembrane segment at 271–285 (VVFMIMMMLIAPAYS) threads the bilayer. Residues 286–738 (LNCLGISNRD…GVFGTAFRSL (453 aa)) are Extracellular-facing. 8 disulfide bridges follow: cysteine 288–cysteine 315, cysteine 345–cysteine 401, cysteine 345–cysteine 406, cysteine 359–cysteine 390, cysteine 377–cysteine 401, cysteine 377–cysteine 406, cysteine 475–cysteine 573, and cysteine 590–cysteine 621. The tract at residues 383–396 (DRGWGNGCGLFGKG) is fusion peptide. Residues 739–759 (FGGMSWVTQALMGALLLWLGI) traverse the membrane as a helical segment. Topologically, residues 760 to 765 (SARERT) are cytoplasmic. Residues 766–786 (VSLIMLSVGGILLFLAVNVHA) traverse the membrane as a helical segment. Residues 787 to 1170 (DTGCAIDMAR…EVLRRRWTAN (384 aa)) are Extracellular-facing. 8 disulfides stabilise this stretch: cysteine 790–cysteine 801, cysteine 841–cysteine 929, cysteine 965–cysteine 1009, cysteine 1067–cysteine 1116, cysteine 1078–cysteine 1099, cysteine 1078–cysteine 1100, cysteine 1099–cysteine 1103, and cysteine 1100–cysteine 1103. N-linked (GlcNAc...) asparagine; by host glycans are attached at residues asparagine 916 and asparagine 993. The helical transmembrane segment at 1171 to 1191 (LALPTSALLMACFIFGGFTYL) threads the bilayer. The Cytoplasmic segment spans residues 1192-1213 (DLFRYFILVGAAFAEANSGGDV). The helical transmembrane segment at 1214–1234 (VHLAMIAAFNIQPVALVTTFF) threads the bilayer. Residues 1235–1276 (RKNWTNRENMILIIAAACTQMACMELKIELFHVMNSLSLAWM) lie on the Lumenal side of the membrane. The chain crosses the membrane as a helical span at residues 1277–1297 (ILKALTTGTTSTLAMPFLAAL). Residues 1298-1302 (SPPMN) are Cytoplasmic-facing. A helical membrane pass occupies residues 1303 to 1323 (WLGLDVVRCLLIMAGVAALIS). Over 1324–1333 (ERRESLAKKK) the chain is Lumenal. A helical transmembrane segment spans residues 1334-1354 (GALLISAALALTGAFSPLVLQ). Over 1355 to 1367 (GALMFTQSLGKRG) the chain is Cytoplasmic. A helical transmembrane segment spans residues 1368–1388 (WPASEVLTAVGMTFALAGSVA). Over 1389 to 1391 (RLD) the chain is Lumenal. A helical transmembrane segment spans residues 1392–1412 (GGTMAIPLATMAILAVAYVLS). At 1413 to 1469 (GKSTDMWLERCADISWINEAEITGTSPRLDVELDSNGDFKMINDPGVPMWMWTCRMG) the chain is on the cytoplasmic side. The interacts with and activates NS3 protease stretch occupies residues 1420–1459 (LERCADISWINEAEITGTSPRLDVELDSNGDFKMINDPGV). The segment at residues 1470–1490 (LMAMAAYNPVLIPVSMAGYWM) is an intramembrane region (helical). Residues 1491–2167 (TVKIHKRGGV…ALEELPDTVE (677 aa)) are Cytoplasmic-facing. A Peptidase S7 domain is found at 1498–1675 (GGVMWDVPAP…ERQEEETPEA (178 aa)). Active-site charge relay system; for serine protease NS3 activity residues include histidine 1548, aspartate 1572, and serine 1632. Positions 1678–1834 (PDMLKKRRLT…DSNAPIIDQE (157 aa)) constitute a Helicase ATP-binding domain. The tract at residues 1682–1685 (KKRR) is important for RNA-binding. 1691–1698 (LHPGAGKT) is a binding site for ATP. Positions 1782–1785 (DEAH) match the DEAH box motif. Residues 1845–2009 (GFEWITEYTG…GLVAQLYGPE (165 aa)) form the Helicase C-terminal domain. Position 1886 is an N6-acetyllysine; by host (lysine 1886). The interval 1944-1969 (APITPASAAQRRGRIGRDPTQSGDEY) is disordered. The interval 2160-2164 (EELPD) is regulates the ATPase activity of NS3 helicase. A helical membrane pass occupies residues 2168–2188 (TILLMTMMCVASLGMFTLMVH). Residues 2189–2190 (RR) lie on the Lumenal side of the membrane. Positions 2191 to 2211 (GLGKTGLGTLVLATVTVLLWI) form an intramembrane region, helical. The Lumenal segment spans residues 2212-2213 (SD). The helical transmembrane segment at 2214-2234 (VPAPKIAGVLLIAFLLMIVLI) threads the bilayer. The Cytoplasmic portion of the chain corresponds to 2235 to 2249 (PEPEKQRSQTDNHLA). The chain crosses the membrane as a helical span at residues 2250 to 2264 (IFLVCVLLLIGAVSA). The Lumenal segment spans residues 2265–2299 (NEMGWLETTKKDIGKLFRSSGDTQEQSTWQSWAPE). The segment at residues 2300–2320 (VRAATAWAGYAGLTVFLTPLF) is an intramembrane region (helical). Over 2321 to 2342 (RHLITTQYVSFSLTAITAQASA) the chain is Lumenal. A helical transmembrane segment spans residues 2343–2363 (LFGLSAGYPFVGIDLAVGFLL). The Cytoplasmic portion of the chain corresponds to 2364–2371 (LGCYGQYN). Residues 2372–2392 (LPTAVATGLLLLAHYGYMIPG) form a helical membrane-spanning segment. At 2393 to 2439 (WQAEAMRAAQKRTAAGVMKNAVVDGIVATDIPEVDTATPITEKKLGQ) the chain is on the lumenal side. A helical transmembrane segment spans residues 2440-2460 (ILLILLCGASLLVKFDTMVLV). Residues 2461–3424 (EAGVLTTSAM…PSPVLFTGAI (964 aa)) lie on the Cytoplasmic side of the membrane. One can recognise an mRNA cap 0-1 NS5-type MT domain in the interval 2520–2784 (GGGSAPTLGE…DVCLGSGTRA (265 aa)). An S-adenosyl-L-methionine-binding site is contributed by serine 2575. A Phosphoserine modification is found at serine 2575. The active-site For 2'-O-MTase activity is the lysine 2580. Glycine 2605, tryptophan 2606, threonine 2623, lysine 2624, aspartate 2650, and valine 2651 together coordinate S-adenosyl-L-methionine. Aspartate 2665 acts as the For 2'-O-MTase activity in catalysis. Position 2666 (isoleucine 2666) interacts with S-adenosyl-L-methionine. Residues lysine 2700 and glutamate 2736 each act as for 2'-O-MTase activity in the active site. Tyrosine 2738 lines the S-adenosyl-L-methionine pocket. 4 residues coordinate Zn(2+): glutamate 2958, histidine 2962, cysteine 2967, and cysteine 2970. A RdRp catalytic domain is found at 3048 to 3200 (GNMFADDTAG…KPIDDRFASA (153 aa)). Residues histidine 3235, cysteine 3251, and cysteine 3370 each coordinate Zn(2+).

This sequence in the N-terminal section; belongs to the class I-like SAM-binding methyltransferase superfamily. mRNA cap 0-1 NS5-type methyltransferase family. In terms of assembly, homodimer. Interacts (via N-terminus) with host EXOC1 (via C-terminus); this interaction results in EXOC1 degradation through the proteasome degradation pathway. As to quaternary structure, forms heterodimers with envelope protein E in the endoplasmic reticulum and Golgi. Homodimer; in the endoplasmic reticulum and Golgi. Interacts with protein prM. Interacts with non-structural protein 1. In terms of assembly, homodimer; Homohexamer when secreted. Interacts with envelope protein E. NS1 interacts with NS4B. Interacts with host complement protein CFH; this interaction leads to the degradation of C3. As to quaternary structure, interacts (via N-terminus) with serine protease NS3. Forms a heterodimer with serine protease NS3. May form homooligomers. In terms of assembly, forms a heterodimer with NS2B. Interacts with non-structural protein 2A (via N-terminus). Interacts with NS4B. Interacts with unphosphorylated RNA-directed RNA polymerase NS5; this interaction stimulates RNA-directed RNA polymerase NS5 guanylyltransferase activity. As to quaternary structure, interacts with serine protease NS3. Homodimer. Interacts with host STAT2; this interaction inhibits the phosphorylation of the latter, and, when all viral proteins are present (polyprotein), targets STAT2 for degradation. Interacts with serine protease NS3. Post-translationally, specific enzymatic cleavages in vivo yield mature proteins. Cleavages in the lumen of endoplasmic reticulum are performed by host signal peptidase, whereas cleavages in the cytoplasmic side are performed by serine protease NS3. Signal cleavage at the 2K-4B site requires a prior NS3 protease-mediated cleavage at the 4A-2K site. In terms of processing, cleaved in post-Golgi vesicles by a host furin, releasing the mature small envelope protein M, and peptide pr. This cleavage is incomplete as up to 30% of viral particles still carry uncleaved prM. N-glycosylated. Post-translationally, N-glycosylated. The excreted form is glycosylated and this is required for efficient secretion of the protein from infected cells. In terms of processing, acetylated by host KAT5. Acetylation modulates NS3 RNA-binding and unwinding activities and plays an important positive role for viral replication. Phosphorylated on serines residues. This phosphorylation may trigger NS5 nuclear localization.

It is found in the virion. Its subcellular location is the host nucleus. The protein localises to the host cytoplasm. The protein resides in the host perinuclear region. It localises to the secreted. It is found in the virion membrane. Its subcellular location is the host endoplasmic reticulum membrane. It carries out the reaction Selective hydrolysis of -Xaa-Xaa-|-Yaa- bonds in which each of the Xaa can be either Arg or Lys and Yaa can be either Ser or Ala.. The catalysed reaction is RNA(n) + a ribonucleoside 5'-triphosphate = RNA(n+1) + diphosphate. It catalyses the reaction a ribonucleoside 5'-triphosphate + H2O = a ribonucleoside 5'-diphosphate + phosphate + H(+). The enzyme catalyses ATP + H2O = ADP + phosphate + H(+). It carries out the reaction a 5'-end (5'-triphosphoguanosine)-ribonucleoside in mRNA + S-adenosyl-L-methionine = a 5'-end (N(7)-methyl 5'-triphosphoguanosine)-ribonucleoside in mRNA + S-adenosyl-L-homocysteine. The catalysed reaction is a 5'-end (N(7)-methyl 5'-triphosphoguanosine)-ribonucleoside in mRNA + S-adenosyl-L-methionine = a 5'-end (N(7)-methyl 5'-triphosphoguanosine)-(2'-O-methyl-ribonucleoside) in mRNA + S-adenosyl-L-homocysteine + H(+). Functionally, plays a role in virus budding by binding to the cell membrane and gathering the viral RNA into a nucleocapsid that forms the core of a mature virus particle. During virus entry, may induce genome penetration into the host cytoplasm after hemifusion induced by the surface proteins. Can migrate to the cell nucleus where it modulates host functions. Overcomes the anti-viral effects of host EXOC1 by sequestering and degrading the latter through the proteasome degradation pathway. In terms of biological role, inhibits RNA silencing by interfering with host Dicer. Prevents premature fusion activity of envelope proteins in trans-Golgi by binding to envelope protein E at pH6.0. After virion release in extracellular space, gets dissociated from E dimers. Its function is as follows. Acts as a chaperone for envelope protein E during intracellular virion assembly by masking and inactivating envelope protein E fusion peptide. prM is the only viral peptide matured by host furin in the trans-Golgi network probably to avoid catastrophic activation of the viral fusion activity in acidic Golgi compartment prior to virion release. prM-E cleavage is inefficient, and many virions are only partially matured. These uncleaved prM would play a role in immune evasion. Functionally, may play a role in virus budding. Exerts cytotoxic effects by activating a mitochondrial apoptotic pathway through M ectodomain. May display a viroporin activity. In terms of biological role, binds to host cell surface receptor and mediates fusion between viral and cellular membranes. Envelope protein is synthesized in the endoplasmic reticulum in the form of heterodimer with protein prM. They play a role in virion budding in the ER, and the newly formed immature particle is covered with 60 spikes composed of heterodimer between precursor prM and envelope protein E. The virion is transported to the Golgi apparatus where the low pH causes dissociation of PrM-E heterodimers and formation of E homodimers. prM-E cleavage is inefficient, and many virions are only partially matured. These uncleaved prM would play a role in immune evasion. Involved in immune evasion, pathogenesis and viral replication. Once cleaved off the polyprotein, is targeted to three destinations: the viral replication cycle, the plasma membrane and the extracellular compartment. Essential for viral replication. Required for formation of the replication complex and recruitment of other non-structural proteins to the ER-derived membrane structures. Excreted as a hexameric lipoparticle that plays a role against host immune response. Antagonizing the complement function. Binds to the host macrophages and dendritic cells. Inhibits signal transduction originating from Toll-like receptor 3 (TLR3). Its function is as follows. Component of the viral RNA replication complex that functions in virion assembly and antagonizes the host alpha/beta interferon antiviral response. Functionally, required cofactor for the serine protease function of NS3. May have membrane-destabilizing activity and form viroporins. In terms of biological role, displays three enzymatic activities: serine protease, NTPase and RNA helicase. NS3 serine protease, in association with NS2B, performs its autocleavage and cleaves the polyprotein at dibasic sites in the cytoplasm: C-prM, NS2A-NS2B, NS2B-NS3, NS3-NS4A, NS4A-2K and NS4B-NS5. NS3 RNA helicase binds RNA and unwinds dsRNA in the 3' to 5' direction. Regulates the ATPase activity of the NS3 helicase activity. NS4A allows NS3 helicase to conserve energy during unwinding. Its function is as follows. Functions as a signal peptide for NS4B and is required for the interferon antagonism activity of the latter. Functionally, induces the formation of ER-derived membrane vesicles where the viral replication takes place. Inhibits interferon (IFN)-induced host STAT1 phosphorylation and nuclear translocation, thereby preventing the establishment of cellular antiviral state by blocking the IFN-alpha/beta pathway. Inhibits STAT2 translocation in the nucleus after IFN-alpha treatment. In terms of biological role, replicates the viral (+) and (-) RNA genome, and performs the capping of genomes in the cytoplasm. NS5 methylates viral RNA cap at guanine N-7 and ribose 2'-O positions. Besides its role in RNA genome replication, also prevents the establishment of cellular antiviral state by blocking the interferon-alpha/beta (IFN-alpha/beta) signaling pathway. Inhibits host TYK2 and STAT2 phosphorylation, thereby preventing activation of JAK-STAT signaling pathway. The sequence is that of Genome polyprotein from Aedes sp. (Human).